Here is a 488-residue protein sequence, read N- to C-terminus: Coagulation factor X (488 aa).

Positions 1–31 are cleaved as a signal peptide; it reads MGRPLHLVLLSASLAGLLLLGESLFIRREQA. The propeptide occupies 32-40; the sequence is NNILARVTR. In terms of domain architecture, Gla spans 41-85; the sequence is ANSFLEEMKKGHLERECMEETCSYEEAREVFEDSDKTNEFWNKYK. Glu46, Glu47, Glu54, Glu56, Glu59, Glu60, Glu65, Glu66, Glu69, Glu72, and Glu79 each carry 4-carboxyglutamate. Cys57 and Cys62 are oxidised to a cystine. One can recognise an EGF-like 1; calcium-binding domain in the interval 86-122; that stretch reads DGDQCETSPCQNQGKCKDGLGEYTCTCLEGFEGKNCE. 11 cysteine pairs are disulfide-bonded: Cys90–Cys101, Cys95–Cys110, Cys112–Cys121, Cys129–Cys140, Cys136–Cys149, Cys151–Cys164, Cys172–Cys342, Cys241–Cys246, Cys261–Cys277, Cys390–Cys404, and Cys415–Cys443. Asp103 is modified ((3R)-3-hydroxyaspartate). The EGF-like 2 domain occupies 125–165; that stretch reads TRKLCSLDNGDCDQFCHEEQNSVVCSCARGYTLADNGKACI. An O-glycosylated at one site region spans residues 183–203; sequence SVAQATSSSGEAPDSITWKPY. Positions 183 to 234 are cleaved as a propeptide — activation peptide; it reads SVAQATSSSGEAPDSITWKPYDAADLDPTENPFDLLDFNQTQPERGDNNLTR. O-linked (GalNAc...) threonine glycans are attached at residues Thr199 and Thr211. Residues Asn221 and Asn231 are each glycosylated (N-linked (GlcNAc...) asparagine). The 233-residue stretch at 235 to 467 folds into the Peptidase S1 domain; sequence IVGGQECKDG…FLKWIDRSMK (233 aa). Active-site charge relay system residues include His276 and Asp322. Residue Ser419 is the Charge relay system of the active site. The interval 476–485 is O-glycosylated at one site; sequence SHAPEVITSS.

It belongs to the peptidase S1 family. In terms of assembly, the two chains are formed from a single-chain precursor by the excision of two Arg residues and are held together by 1 or more disulfide bonds. Forms a heterodimer with SERPINA5. Interacts (inactive and activated) with ixolaris, an anticoagulant protein from Ixodes scapularis saliva. Interacts (activated) with iripin-8, a serine protease inhibitor from Ixodes ricinus saliva. Interacts (activated) with FXa-directed anticoagulant from Aedes albopictus saliva. Interacts (activated) with guianensin, an anticoagulant protein from Simulium guianense saliva. Interacts (activated) with simukunin, an anticoagulant protein from Simulium vittatum saliva. In terms of processing, the vitamin K-dependent, enzymatic carboxylation of some glutamate residues allows the modified protein to bind calcium. N- and O-glycosylated. O-glycosylated with core 1 or possibly core 8 glycans. Post-translationally, proteolytically cleaved and activated by cathepsin CTSG. The activation peptide is cleaved by factor IXa (in the intrinsic pathway), or by factor VIIa (in the extrinsic pathway). In terms of processing, the iron and 2-oxoglutarate dependent 3-hydroxylation of aspartate and asparagine is (R) stereospecific within EGF domains. In terms of tissue distribution, plasma; synthesized in the liver.

The protein resides in the secreted. The catalysed reaction is Selective cleavage of Arg-|-Thr and then Arg-|-Ile bonds in prothrombin to form thrombin.. Inhibited by SERPINA5 and SERPINA10. In terms of biological role, factor Xa is a vitamin K-dependent glycoprotein that converts prothrombin to thrombin in the presence of factor Va, calcium and phospholipid during blood clotting. Factor Xa activates pro-inflammatory signaling pathways in a protease-activated receptor (PAR)-dependent manner. Up-regulates expression of protease-activated receptors (PARs) F2R, F2RL1 and F2RL2 in dermal microvascular endothelial cells. Triggers the production of pro-inflammatory cytokines, such as MCP-1/CCL2 and IL6, in cardiac fibroblasts and umbilical vein endothelial cells in PAR-1/F2R-dependent manner. Triggers the production of pro-inflammatory cytokines, such as MCP-1/CCL2, IL6, TNF-alpha/TNF, IL-1beta/IL1B, IL8/CXCL8 and IL18, in endothelial cells and atrial tissues. Induces expression of adhesion molecules, such as ICAM1, VCAM1 and SELE, in endothelial cells and atrial tissues. Increases expression of phosphorylated ERK1/2 in dermal microvascular endothelial cells and atrial tissues. Triggers activation of the transcription factor NF-kappa-B in dermal microvascular endothelial cells and atrial tissues. Activates pro-inflammatory and pro-fibrotic responses in dermal fibroblasts and enhances wound healing probably via PAR-2/F2RL1-dependent mechanism. Activates barrier protective signaling responses in endothelial cells in PAR-2/F2RL1-dependent manner; the activity depends on the cleavage of PAR-2/F2RL1 by factor Xa. Up-regulates expression of plasminogen activator inhibitor 1 (SERPINE1) in atrial tissues. The protein is Coagulation factor X (F10) of Homo sapiens (Human).